We begin with the raw amino-acid sequence, 79 residues long: Neurotoxin 3FTx-LI (79 aa).

Positions 1–21 (MKTLLLTLVVVTIVCLDLGYT) are cleaved as a signal peptide. Disulfide bonds link Cys24/Cys43, Cys36/Cys61, Cys65/Cys71, and Cys72/Cys77.

Expressed by the venom gland.

Its subcellular location is the secreted. Its function is as follows. Blocks both the muscle-twitch response to nerve stimulation and the response to exogenous acetylcholine. This Bungarus fasciatus (Banded krait) protein is Neurotoxin 3FTx-LI.